Consider the following 307-residue polypeptide: Glycine--tRNA ligase alpha subunit (307 aa).

The protein belongs to the class-II aminoacyl-tRNA synthetase family. As to quaternary structure, tetramer of two alpha and two beta subunits.

The protein resides in the cytoplasm. The catalysed reaction is tRNA(Gly) + glycine + ATP = glycyl-tRNA(Gly) + AMP + diphosphate. The chain is Glycine--tRNA ligase alpha subunit from Xylella fastidiosa (strain M23).